Reading from the N-terminus, the 174-residue chain is Protein GrpE (174 aa).

The disordered stretch occupies residues 1-35 (MAQDIKNEEVEEVQEEEVVETAEETTPEKSELDLA). Residues 9 to 25 (EVEEVQEEEVVETAEET) show a composition bias toward acidic residues. Over residues 26–35 (TPEKSELDLA) the composition is skewed to basic and acidic residues.

Belongs to the GrpE family. In terms of assembly, homodimer.

It localises to the cytoplasm. Functionally, participates actively in the response to hyperosmotic and heat shock by preventing the aggregation of stress-denatured proteins, in association with DnaK and GrpE. It is the nucleotide exchange factor for DnaK and may function as a thermosensor. Unfolded proteins bind initially to DnaJ; upon interaction with the DnaJ-bound protein, DnaK hydrolyzes its bound ATP, resulting in the formation of a stable complex. GrpE releases ADP from DnaK; ATP binding to DnaK triggers the release of the substrate protein, thus completing the reaction cycle. Several rounds of ATP-dependent interactions between DnaJ, DnaK and GrpE are required for fully efficient folding. The protein is Protein GrpE of Streptococcus pneumoniae (strain ATCC BAA-255 / R6).